The chain runs to 56 residues: Photosystem II reaction center protein K (56 aa).

A propeptide spanning residues Met-1–Cys-19 is cleaved from the precursor. Residues Met-35–Phe-55 form a helical membrane-spanning segment.

This sequence belongs to the PsbK family. PSII is composed of 1 copy each of membrane proteins PsbA, PsbB, PsbC, PsbD, PsbE, PsbF, PsbH, PsbI, PsbJ, PsbK, PsbL, PsbM, PsbT, PsbX, PsbY, PsbZ, Psb30/Ycf12, at least 3 peripheral proteins of the oxygen-evolving complex and a large number of cofactors. It forms dimeric complexes.

It localises to the plastid. The protein resides in the chloroplast thylakoid membrane. In terms of biological role, one of the components of the core complex of photosystem II (PSII). PSII is a light-driven water:plastoquinone oxidoreductase that uses light energy to abstract electrons from H(2)O, generating O(2) and a proton gradient subsequently used for ATP formation. It consists of a core antenna complex that captures photons, and an electron transfer chain that converts photonic excitation into a charge separation. This chain is Photosystem II reaction center protein K, found in Welwitschia mirabilis (Tree tumbo).